Consider the following 367-residue polypeptide: uncharacterized protein (367 aa).

A helical membrane pass occupies residues 6 to 26 (IAAGVVVALAAVWCTSAWFTG).

This sequence to E.coli YdgA and YihF.

The protein resides in the membrane. This is an uncharacterized protein from Haemophilus influenzae (strain ATCC 51907 / DSM 11121 / KW20 / Rd).